The primary structure comprises 347 residues: uncharacterized protein (347 aa).

Zn(2+)-binding residues include cysteine 39, histidine 65, cysteine 95, cysteine 98, cysteine 101, cysteine 109, and glutamate 152.

This sequence belongs to the zinc-containing alcohol dehydrogenase family. It depends on Zn(2+) as a cofactor.

This is an uncharacterized protein from Escherichia coli (strain K12).